The primary structure comprises 342 residues: Serine/threonine-protein kinase SAPK1 (342 aa).

Positions Tyr-4–Phe-260 constitute a Protein kinase domain. ATP is bound by residues Ile-10–Ala-18 and Lys-33. Asp-123 (proton acceptor) is an active-site residue. The tract at residues Glu-253–Leu-342 is C-terminal.

It belongs to the protein kinase superfamily. Ser/Thr protein kinase family. In terms of processing, phosphorylated. Expressed in leaf blades, leaf sheaths and roots. Expressed in shoots and roots of young seedlings.

It catalyses the reaction L-seryl-[protein] + ATP = O-phospho-L-seryl-[protein] + ADP + H(+). The enzyme catalyses L-threonyl-[protein] + ATP = O-phospho-L-threonyl-[protein] + ADP + H(+). Its activity is regulated as follows. Activated by phosphorylation in response to hyperosmotic stress within 5 minutes. In terms of biological role, may play a role in signal transduction of hyperosmotic response. This chain is Serine/threonine-protein kinase SAPK1 (SAPK1), found in Oryza sativa subsp. japonica (Rice).